Here is a 206-residue protein sequence, read N- to C-terminus: dTTP/UTP pyrophosphatase (206 aa).

The active-site Proton acceptor is D87.

This sequence belongs to the Maf family. YhdE subfamily. A divalent metal cation serves as cofactor.

The protein resides in the cytoplasm. The catalysed reaction is dTTP + H2O = dTMP + diphosphate + H(+). It catalyses the reaction UTP + H2O = UMP + diphosphate + H(+). In terms of biological role, nucleoside triphosphate pyrophosphatase that hydrolyzes dTTP and UTP. May have a dual role in cell division arrest and in preventing the incorporation of modified nucleotides into cellular nucleic acids. This chain is dTTP/UTP pyrophosphatase, found in Aromatoleum aromaticum (strain DSM 19018 / LMG 30748 / EbN1) (Azoarcus sp. (strain EbN1)).